A 647-amino-acid chain; its full sequence is Threonine--tRNA ligase (647 aa).

Residues 1–61 enclose the TGS domain; sequence MIKITFPDGA…EEDGSIEIVT (61 aa). The segment at 240–538 is catalytic; sequence DHRKLGKELD…LIETYKGAFP (299 aa). Residues cysteine 334, histidine 385, and histidine 515 each contribute to the Zn(2+) site.

It belongs to the class-II aminoacyl-tRNA synthetase family. As to quaternary structure, homodimer. It depends on Zn(2+) as a cofactor.

It is found in the cytoplasm. The catalysed reaction is tRNA(Thr) + L-threonine + ATP = L-threonyl-tRNA(Thr) + AMP + diphosphate + H(+). Catalyzes the attachment of threonine to tRNA(Thr) in a two-step reaction: L-threonine is first activated by ATP to form Thr-AMP and then transferred to the acceptor end of tRNA(Thr). Also edits incorrectly charged L-seryl-tRNA(Thr). This is Threonine--tRNA ligase from Streptococcus agalactiae serotype V (strain ATCC BAA-611 / 2603 V/R).